The following is a 400-amino-acid chain: MSLGRDRYSLPRTYKRVSHAKDKARPELRKFGWETLGYSESFNLPPFRDSIQRVDGNNLTVEEFRRDFERPRIPVIITGLTDNWAAKDKWTVERLSKKYRNQNFKCGEDDNGNSVRMKMKYYHDYMLNNKDDSPLYIFDSSFAERRKTKKLSEDYSVPKFFEDDLFHYADDKKRPPHRWFVMGPARSGTAIHIDPLGTSAWNSLLQGHKRWVLIPPIAPRDLVKPMAHEKGKHPDEGITWFQTVYKRVRSPSWPKEYAPIECRQGPGETMFVPSGWWHVVINEEYTIAVTHNYCSVENLHLVWPKTVKGRPKLSKHWVKRLTEQRPELLEIIKSASEIPLYDMNESSSDSSSSSSSSDDSSDESDCDDSGRCGGRKRKNDDRSNECPEKMSTTYFQNSLV.

A JmjC domain is found at 146 to 310 (RKTKKLSEDY…LVWPKTVKGR (165 aa)). T189 contacts substrate. Fe cation contacts are provided by H192 and D194. Residue N202 participates in 2-oxoglutarate binding. K209 contributes to the substrate binding site. H278 contacts Fe cation. T290 contacts 2-oxoglutarate. The interval 342 to 400 (DMNESSSDSSSSSSSSDDSSDESDCDDSGRCGGRKRKNDDRSNECPEKMSTTYFQNSLV) is disordered. A compositionally biased stretch (low complexity) spans 346–358 (SSSDSSSSSSSSD). Over residues 378-388 (KNDDRSNECPE) the composition is skewed to basic and acidic residues. Polar residues predominate over residues 390–400 (MSTTYFQNSLV).

This sequence belongs to the JMJD6 family. Interacts with ced-5 and ced-12. Requires Fe(2+) as cofactor.

Its subcellular location is the nucleus. In terms of biological role, dioxygenase that can both act as a histone arginine demethylase and a lysyl-hydroxylase. This Caenorhabditis elegans protein is Bifunctional arginine demethylase and lysyl-hydroxylase psr-1 (psr-1).